The sequence spans 282 residues: Deoxyribonuclease-1 (282 aa).

Positions 1 to 22 are cleaved as a signal peptide; that stretch reads MRGTRLMGLLLALAGLLQLGLS. N-linked (GlcNAc...) asparagine glycosylation occurs at N40. E100 is a catalytic residue. C123 and C126 are joined by a disulfide. The active site involves H156. Residues C195 and C231 are joined by a disulfide bond.

This sequence belongs to the DNase I family. It depends on Ca(2+) as a cofactor. The cofactor is Mg(2+). The only differences between the A and B forms and the C and D forms are in the compositions of the carbohydrate bound to Asn-40.

It localises to the secreted. It is found in the zymogen granule. Its subcellular location is the nucleus envelope. The catalysed reaction is Endonucleolytic cleavage to 5'-phosphodinucleotide and 5'-phosphooligonucleotide end-products.. Its function is as follows. Serum endocuclease secreted into body fluids by a wide variety of exocrine and endocrine organs. Expressed by non-hematopoietic tissues and preferentially cleaves protein-free DNA. Among other functions, seems to be involved in cell death by apoptosis. Binds specifically to G-actin and blocks actin polymerization. Together with DNASE1L3, plays a key role in degrading neutrophil extracellular traps (NETs). NETs are mainly composed of DNA fibers and are released by neutrophils to bind pathogens during inflammation. Degradation of intravascular NETs by DNASE1 and DNASE1L3 is required to prevent formation of clots that obstruct blood vessels and cause organ damage following inflammation. The polypeptide is Deoxyribonuclease-1 (DNASE1) (Bos taurus (Bovine)).